A 318-amino-acid chain; its full sequence is Homoserine kinase (318 aa).

97–107 (PIGSGLGSSAC) provides a ligand contact to ATP.

This sequence belongs to the GHMP kinase family. Homoserine kinase subfamily.

The protein resides in the cytoplasm. The catalysed reaction is L-homoserine + ATP = O-phospho-L-homoserine + ADP + H(+). Its pathway is amino-acid biosynthesis; L-threonine biosynthesis; L-threonine from L-aspartate: step 4/5. Catalyzes the ATP-dependent phosphorylation of L-homoserine to L-homoserine phosphate. The chain is Homoserine kinase from Vibrio cholerae serotype O1 (strain M66-2).